We begin with the raw amino-acid sequence, 172 residues long: Large ribosomal subunit protein uL10 (172 aa).

It belongs to the universal ribosomal protein uL10 family. As to quaternary structure, part of the ribosomal stalk of the 50S ribosomal subunit. The N-terminus interacts with L11 and the large rRNA to form the base of the stalk. The C-terminus forms an elongated spine to which L12 dimers bind in a sequential fashion forming a multimeric L10(L12)X complex.

Functionally, forms part of the ribosomal stalk, playing a central role in the interaction of the ribosome with GTP-bound translation factors. In Bartonella henselae (strain ATCC 49882 / DSM 28221 / CCUG 30454 / Houston 1) (Rochalimaea henselae), this protein is Large ribosomal subunit protein uL10.